Consider the following 402-residue polypeptide: Serine/threonine transporter SstT (402 aa).

Transmembrane regions (helical) follow at residues 17–37 (IAIG…ITVI), 44–64 (FVGG…ANAL), 78–98 (IIVL…ISHY), 138–158 (ALSQ…GFAM), 179–199 (IVRW…FDTI), 212–232 (VLIL…NPII), 295–315 (MAGA…TLGI), and 336–356 (ASGI…LFGI).

This sequence belongs to the dicarboxylate/amino acid:cation symporter (DAACS) (TC 2.A.23) family.

The protein localises to the cell membrane. The catalysed reaction is L-serine(in) + Na(+)(in) = L-serine(out) + Na(+)(out). It catalyses the reaction L-threonine(in) + Na(+)(in) = L-threonine(out) + Na(+)(out). In terms of biological role, involved in the import of serine and threonine into the cell, with the concomitant import of sodium (symport system). The protein is Serine/threonine transporter SstT of Streptococcus thermophilus (strain CNRZ 1066).